We begin with the raw amino-acid sequence, 44 residues long: MNELTLIDFYLCFLAFLLFLVLIMLLIFWFSLEIQDIEEPCNKV.

A helical transmembrane segment spans residues 9–29; sequence FYLCFLAFLLFLVLIMLLIFW.

Its subcellular location is the host membrane. This is Non-structural protein 7b from Bat coronavirus HKU3 (BtCoV).